The chain runs to 499 residues: Low-affinity inorganic phosphate transporter PitB (499 aa).

10 helical membrane passes run Phe-5 to Phe-25, Leu-52 to Val-72, Leu-94 to Phe-114, Leu-124 to Met-144, Ile-155 to Phe-175, Pro-207 to Ala-227, Gly-233 to Met-253, Ala-382 to Trp-402, Ala-430 to Leu-450, and Ile-473 to Trp-493.

It belongs to the inorganic phosphate transporter (PiT) (TC 2.A.20) family. Pit subfamily.

Its subcellular location is the cell inner membrane. It carries out the reaction phosphate(in) + H(+)(in) = phosphate(out) + H(+)(out). Low-affinity inorganic phosphate transporter. This Escherichia coli (strain K12) protein is Low-affinity inorganic phosphate transporter PitB.